The following is a 388-amino-acid chain: 2-epi-5-epi-valiolone synthase (388 aa).

Residues 92 to 95 (ERNK), 124 to 128 (GIVAD), 148 to 149 (TT), K161, K170, and 188 to 191 (LLAT) contribute to the NAD(+) site. Zn(2+) contacts are provided by E203, H267, and H283.

This sequence belongs to the sugar phosphate cyclases superfamily. EEVS-like family. NAD(+) is required as a cofactor. It depends on Co(2+) as a cofactor. Zn(2+) serves as cofactor.

The catalysed reaction is D-sedoheptulose 7-phosphate = 2-epi-5-epi-valiolone + phosphate. Its function is as follows. Catalyzes the cyclization of D-sedoheptulose 7-phosphate to 2-epi-5-epi-valiolone. Probably involved in acarbose biosynthesis. The polypeptide is 2-epi-5-epi-valiolone synthase (Streptomyces glaucescens).